We begin with the raw amino-acid sequence, 142 residues long: Snaclec 2 (142 aa).

Positions 1 to 23 (MGRFIFVSFSLLVVFLSLSGTGA) are cleaved as a signal peptide. An intrachain disulfide couples C25 to C36. The C-type lectin domain maps to 32-139 (YEGHCYRVFQ…CSETHNVICK (108 aa)). N-linked (GlcNAc...) asparagine glycosylation is present at N43. Cystine bridges form between C53–C138 and C115–C130.

It belongs to the snaclec family. Heterodimer; disulfide-linked. Expressed by the venom gland.

It is found in the secreted. In terms of biological role, interferes with one step of hemostasis (modulation of platelet aggregation, or coagulation cascade, for example). The chain is Snaclec 2 from Sistrurus catenatus edwardsii (Desert massasauga).